Consider the following 208-residue polypeptide: Na(+)-translocating NADH-quinone reductase subunit D (208 aa).

5 consecutive transmembrane segments (helical) span residues 42-62 (IVMTFAVIFVTAFSNLFISLI), 70-90 (VRIIVQMAIIASLVILVDQIL), 103-123 (VFVGLIITNCIVMGRAEAFAM), 131-151 (FVDGIGNGLGYGAILVSVAFI), and 178-198 (NGLFLLAPSAFFIIGFIIWGI).

Belongs to the NqrDE/RnfAE family. In terms of assembly, composed of six subunits; NqrA, NqrB, NqrC, NqrD, NqrE and NqrF.

It localises to the cell inner membrane. The catalysed reaction is a ubiquinone + n Na(+)(in) + NADH + H(+) = a ubiquinol + n Na(+)(out) + NAD(+). Functionally, NQR complex catalyzes the reduction of ubiquinone-1 to ubiquinol by two successive reactions, coupled with the transport of Na(+) ions from the cytoplasm to the periplasm. NqrA to NqrE are probably involved in the second step, the conversion of ubisemiquinone to ubiquinol. The sequence is that of Na(+)-translocating NADH-quinone reductase subunit D from Pasteurella multocida (strain Pm70).